Reading from the N-terminus, the 162-residue chain is Ribosome maturation factor RimP (162 aa).

This sequence belongs to the RimP family.

The protein resides in the cytoplasm. Functionally, required for maturation of 30S ribosomal subunits. The sequence is that of Ribosome maturation factor RimP from Syntrophotalea carbinolica (strain DSM 2380 / NBRC 103641 / GraBd1) (Pelobacter carbinolicus).